The following is a 224-amino-acid chain: Ethylene-inducing xylanase 5 (224 aa).

Residues 1 to 16 (MLKSLVVLLLTSRVIA) form the signal peptide. Positions 32 to 218 (QATPNSQGTH…SSGFAEMTVA (187 aa)) constitute a GH11 domain. A glycan (N-linked (GlcNAc...) asparagine) is linked at Asn88. Residue Glu117 is the Nucleophile of the active site. Glu205 serves as the catalytic Proton donor.

The protein belongs to the glycosyl hydrolase 11 (cellulase G) family.

The enzyme catalyses Endohydrolysis of (1-&gt;4)-beta-D-xylosidic linkages in xylans.. The protein operates within glycan degradation; xylan degradation. Endo-1,4-beta-xylanase involved in the hydrolysis of xylan, a major structural heterogeneous polysaccharide found in plant biomass representing the second most abundant polysaccharide in the biosphere, after cellulose. May act as an elicitor of plant defense responses in certain plants but does not exhibit any cell death when transiently expressed in N.benthamiana. This Verticillium dahliae (strain VdLs.17 / ATCC MYA-4575 / FGSC 10137) (Verticillium wilt) protein is Ethylene-inducing xylanase 5.